Here is a 456-residue protein sequence, read N- to C-terminus: tRNA-2-methylthio-N(6)-dimethylallyladenosine synthase (456 aa).

The MTTase N-terminal domain occupies 6–123; that stretch reads KHVYIETYGC…LPNLIEEAQR (118 aa). Cysteine 15, cysteine 52, cysteine 86, cysteine 160, cysteine 164, and cysteine 167 together coordinate [4Fe-4S] cluster. The Radical SAM core domain occupies 146–380; sequence RAEGPTAYVS…RILEMAASIS (235 aa). Residues 381-444 enclose the TRAM domain; sequence EAMVGTEQWV…KNSLRGRLIE (64 aa).

Belongs to the methylthiotransferase family. MiaB subfamily. As to quaternary structure, monomer. [4Fe-4S] cluster is required as a cofactor.

The protein localises to the cytoplasm. The catalysed reaction is N(6)-dimethylallyladenosine(37) in tRNA + (sulfur carrier)-SH + AH2 + 2 S-adenosyl-L-methionine = 2-methylsulfanyl-N(6)-dimethylallyladenosine(37) in tRNA + (sulfur carrier)-H + 5'-deoxyadenosine + L-methionine + A + S-adenosyl-L-homocysteine + 2 H(+). Catalyzes the methylthiolation of N6-(dimethylallyl)adenosine (i(6)A), leading to the formation of 2-methylthio-N6-(dimethylallyl)adenosine (ms(2)i(6)A) at position 37 in tRNAs that read codons beginning with uridine. The protein is tRNA-2-methylthio-N(6)-dimethylallyladenosine synthase of Dichelobacter nodosus (strain VCS1703A).